We begin with the raw amino-acid sequence, 207 residues long: Glycerol-3-phosphate acyltransferase (207 aa).

5 consecutive transmembrane segments (helical) span residues 4-24, 58-78, 86-106, 120-140, and 162-182; these read VVAT…SFAV, ILTL…AQWL, ETGI…PVFH, ILLA…LIIA, and VLMN…VLLI.

Belongs to the PlsY family. As to quaternary structure, probably interacts with PlsX.

Its subcellular location is the cell inner membrane. The catalysed reaction is an acyl phosphate + sn-glycerol 3-phosphate = a 1-acyl-sn-glycero-3-phosphate + phosphate. It functions in the pathway lipid metabolism; phospholipid metabolism. In terms of biological role, catalyzes the transfer of an acyl group from acyl-phosphate (acyl-PO(4)) to glycerol-3-phosphate (G3P) to form lysophosphatidic acid (LPA). This enzyme utilizes acyl-phosphate as fatty acyl donor, but not acyl-CoA or acyl-ACP. This Ralstonia pickettii (strain 12J) protein is Glycerol-3-phosphate acyltransferase.